Here is a 119-residue protein sequence, read N- to C-terminus: C-C motif chemokine 24 (119 aa).

The first 26 residues, 1-26 (MAGSATIVAGLLLLVACACCIFPIDS), serve as a signal peptide directing secretion. 2 disulfides stabilise this stretch: Cys33-Cys58 and Cys34-Cys74. N-linked (GlcNAc...) asparagine glycans are attached at residues Asn54 and Asn115. The segment at 96–119 (PSKGAKAVRTKFAVQRRRGNSTEV) is disordered. Over residues 101–119 (KAVRTKFAVQRRRGNSTEV) the composition is skewed to basic residues.

This sequence belongs to the intercrine beta (chemokine CC) family. In terms of tissue distribution, highest expression in jejunum and spleen. Lower levels found in liver and lung. No expression detected in kidney, thymus, brain or testis.

Its subcellular location is the secreted. Functionally, chemotactic for resting T-lymphocytes, and eosinophils. Has lower chemotactic activity for neutrophils but none for monocytes and activated lymphocytes. Is a strong suppressor of colony formation by a multipotential hematopoietic progenitor cell line. Binds to CCR3. The polypeptide is C-C motif chemokine 24 (Mus musculus (Mouse)).